The primary structure comprises 256 residues: Type III pantothenate kinase (256 aa).

6-13 lines the ATP pocket; sequence DVGNSNIV. Residues Tyr-100 and 107–110 each bind substrate; that span reads GADR. The active-site Proton acceptor is Asp-109. Asp-129 contributes to the K(+) binding site. Thr-132 is a binding site for ATP. Residue Thr-184 participates in substrate binding.

It belongs to the type III pantothenate kinase family. In terms of assembly, homodimer. NH4(+) serves as cofactor. Requires K(+) as cofactor.

It localises to the cytoplasm. It catalyses the reaction (R)-pantothenate + ATP = (R)-4'-phosphopantothenate + ADP + H(+). The protein operates within cofactor biosynthesis; coenzyme A biosynthesis; CoA from (R)-pantothenate: step 1/5. In terms of biological role, catalyzes the phosphorylation of pantothenate (Pan), the first step in CoA biosynthesis. The protein is Type III pantothenate kinase of Geotalea daltonii (strain DSM 22248 / JCM 15807 / FRC-32) (Geobacter daltonii).